Reading from the N-terminus, the 340-residue chain is Glycerol-3-phosphate dehydrogenase [NAD(P)+] (340 aa).

NADPH contacts are provided by Ser-14, Phe-15, Arg-35, and Lys-108. Lys-108 and Gly-136 together coordinate sn-glycerol 3-phosphate. Ala-140 provides a ligand contact to NADPH. Sn-glycerol 3-phosphate-binding residues include Lys-191, Asp-244, Ser-254, Arg-255, and Asn-256. Residue Lys-191 is the Proton acceptor of the active site. Residue Arg-255 coordinates NADPH. Position 281 (Glu-281) interacts with NADPH.

Belongs to the NAD-dependent glycerol-3-phosphate dehydrogenase family.

The protein resides in the cytoplasm. The enzyme catalyses sn-glycerol 3-phosphate + NAD(+) = dihydroxyacetone phosphate + NADH + H(+). It catalyses the reaction sn-glycerol 3-phosphate + NADP(+) = dihydroxyacetone phosphate + NADPH + H(+). The protein operates within membrane lipid metabolism; glycerophospholipid metabolism. Its function is as follows. Catalyzes the reduction of the glycolytic intermediate dihydroxyacetone phosphate (DHAP) to sn-glycerol 3-phosphate (G3P), the key precursor for phospholipid synthesis. The chain is Glycerol-3-phosphate dehydrogenase [NAD(P)+] from Pseudomonas aeruginosa (strain ATCC 15692 / DSM 22644 / CIP 104116 / JCM 14847 / LMG 12228 / 1C / PRS 101 / PAO1).